We begin with the raw amino-acid sequence, 462 residues long: Nitrate/nitrite transporter NarU (462 aa).

Residues 1–35 are Cytoplasmic-facing; it reads MALQNEKNSRYLLRDWKPENPAFWENKGKHIARRN. A helical transmembrane segment spans residues 36–56; the sequence is LWISVSCLLLAFCVWMLFSAV. Over 57–76 the chain is Periplasmic; that stretch reads TVNLNKIGFNFTTDQLFLLT. Residues 77–97 traverse the membrane as a helical segment; sequence ALPSVSGALLRVPYSFMVPIF. The Cytoplasmic portion of the chain corresponds to 98–101; sequence GGRR. A helical membrane pass occupies residues 102-122; that stretch reads WTVFSTAILIIPCVWLGIAVQ. The Periplasmic portion of the chain corresponds to 123-125; that stretch reads NPN. Residues 126 to 146 form a helical membrane-spanning segment; sequence TPFGIFIVIALLCGFAGANFA. Topologically, residues 147 to 180 are cytoplasmic; it reads SSMGNISFFFPKAKQGSALGINGGLGNLGVSVMQ. The helical transmembrane segment at 181 to 201 threads the bilayer; it reads LVAPLVIFVPVFAFLGVNGVP. At 202-206 the chain is on the periplasmic side; it reads QADGS. Residues 207–227 form a helical membrane-spanning segment; the sequence is VMSLANAAWIWVPLLAIATIA. Residues 228–258 are Cytoplasmic-facing; sequence AWSGMNDIASSRASIADQLPVLQRLHLWLLS. The chain crosses the membrane as a helical span at residues 259 to 279; the sequence is LLYLATFGSFIGFSAGFAMLA. The Periplasmic portion of the chain corresponds to 280-287; that stretch reads KTQFPDVN. A helical membrane pass occupies residues 288-308; it reads ILRLAFFGPFIGAIARSVGGA. At 309–317 the chain is on the cytoplasmic side; that stretch reads ISDKFGGVR. A helical membrane pass occupies residues 318–338; it reads VTLINFIFMAIFSALLFLTLP. Topologically, residues 339–344 are periplasmic; the sequence is GTGSGN. The chain crosses the membrane as a helical span at residues 345–365; sequence FIAFYAVFMGLFLTAGLGSGS. Residues 366-401 lie on the Cytoplasmic side of the membrane; the sequence is TFQMIAVIFRQITIYRVKMKGGSDEQAHKEAVTETA. Residues 402-422 traverse the membrane as a helical segment; that stretch reads AALGFISAIGAVGGFFIPQAF. The Periplasmic segment spans residues 423–432; sequence GMSLNMTGSP. Residues 433 to 453 form a helical membrane-spanning segment; sequence VGAMKVFLIFYIVCVLLTWLV. The Cytoplasmic portion of the chain corresponds to 454 to 462; the sequence is YGRRKFSQK.

It belongs to the major facilitator superfamily. Nitrate/nitrite porter (TC 2.A.1.8) family.

Its subcellular location is the cell inner membrane. In terms of biological role, catalyzes nitrate uptake, nitrite uptake and nitrite export across the cytoplasmic membrane. May function as a nitrate/H(+) and nitrite/H(+) channel. Could confer a selective advantage during severe nutrient starvation or slow growth. This chain is Nitrate/nitrite transporter NarU (narU), found in Escherichia coli (strain K12).